Reading from the N-terminus, the 473-residue chain is Eukaryotic translation initiation factor 2 subunit gamma (473 aa).

The region spanning 40-250 (QATINIGTIG…AICNIAPPNY (211 aa)) is the tr-type G domain. The interval 49 to 56 (GHVAHGKS) is G1. GTP is bound at residue 52–57 (AHGKSS). Positions 77-81 (NITIK) are G2. Residues 135-138 (DCPG) form a G3 region. Residues 193–196 (NKMD) and 228–230 (SAQ) contribute to the GTP site. Residues 193–196 (NKMD) form a G4 region. Residues 228-230 (SAQ) form a G5 region. The tract at residues 458-470 (GKVRSGGTLCEVV) is interacts with CDC123.

Belongs to the TRAFAC class translation factor GTPase superfamily. Classic translation factor GTPase family. EIF2G subfamily. In terms of assembly, eukaryotic translation initiation factor 2 eIF2 is a heterotrimeric complex composed of an alpha, a beta and a gamma subunit. The factors eIF-1, eIF-2, eIF-3, TIF5/eIF-5 and methionyl-tRNAi form a multifactor complex (MFC) that may bind to the 40S ribosome.

It is found in the cytoplasm. The protein resides in the cytosol. It carries out the reaction GTP + H2O = GDP + phosphate + H(+). Its function is as follows. As a subunit of eukaryotic initiation factor 2 eIF2, involved in the early steps of protein synthesis. In the presence of GTP, eIF-2 forms a ternary complex with initiator tRNA Met-tRNAi and then recruits the 40S ribosomal complex and initiation factors eIF-1, eIF-1A and eIF-3 to form the 43S pre-initiation complex (43S PIC), a step that determines the rate of protein translation. The 43S PIC binds to mRNA and scans downstream to the initiation codon, where it forms a 48S initiation complex by codon-anticodon base pairing. This leads to the displacement of eIF-1 to allow GTPase-activating protein (GAP) eIF-5-mediated hydrolysis of eIF2-bound GTP. Hydrolysis of GTP and release of Pi, which makes GTP hydrolysis irreversible, causes the release of the eIF-2-GDP binary complex from the 40S subunit, an event that is essential for the subsequent joining of the 60S ribosomal subunit to form an elongation-competent 80S ribosome. In order for eIF-2 to recycle and catalyze another round of initiation, the GDP bound to eIF-2 must be exchanged with GTP by way of a reaction catalyzed by GDP-GTP exchange factor (GEF) eIF-2B. In Cryptococcus neoformans var. grubii serotype A (strain H99 / ATCC 208821 / CBS 10515 / FGSC 9487) (Filobasidiella neoformans var. grubii), this protein is Eukaryotic translation initiation factor 2 subunit gamma.